Reading from the N-terminus, the 763-residue chain is Phosphoglycerol transferase I (763 aa).

The next 4 membrane-spanning stretches (helical) occupy residues 1-21 (MSEL…AWKA), 26-46 (WWFA…ITLF), 77-97 (ILPG…LGWI), and 108-128 (FGYS…SPAF).

This sequence belongs to the OpgB family.

The protein resides in the cell inner membrane. It catalyses the reaction a phosphatidylglycerol + a membrane-derived-oligosaccharide D-glucose = a 1,2-diacyl-sn-glycerol + a membrane-derived-oligosaccharide 6-(glycerophospho)-D-glucose.. Its pathway is glycan metabolism; osmoregulated periplasmic glucan (OPG) biosynthesis. Its function is as follows. Transfers a phosphoglycerol residue from phosphatidylglycerol to the membrane-bound nascent glucan backbones. The chain is Phosphoglycerol transferase I from Escherichia coli (strain SMS-3-5 / SECEC).